Here is a 540-residue protein sequence, read N- to C-terminus: Bifunctional purine biosynthesis protein PurH (540 aa).

An MGS-like domain is found at 1–144; it reads MKRALISVYD…KNYQDVGVVV (144 aa). The segment at 204 to 224 is disordered; the sequence is ETAPERPIGADPGPQKPAAPS.

Belongs to the PurH family.

The enzyme catalyses (6R)-10-formyltetrahydrofolate + 5-amino-1-(5-phospho-beta-D-ribosyl)imidazole-4-carboxamide = 5-formamido-1-(5-phospho-D-ribosyl)imidazole-4-carboxamide + (6S)-5,6,7,8-tetrahydrofolate. It catalyses the reaction IMP + H2O = 5-formamido-1-(5-phospho-D-ribosyl)imidazole-4-carboxamide. It functions in the pathway purine metabolism; IMP biosynthesis via de novo pathway; 5-formamido-1-(5-phospho-D-ribosyl)imidazole-4-carboxamide from 5-amino-1-(5-phospho-D-ribosyl)imidazole-4-carboxamide (10-formyl THF route): step 1/1. Its pathway is purine metabolism; IMP biosynthesis via de novo pathway; IMP from 5-formamido-1-(5-phospho-D-ribosyl)imidazole-4-carboxamide: step 1/1. This is Bifunctional purine biosynthesis protein PurH from Symbiobacterium thermophilum (strain DSM 24528 / JCM 14929 / IAM 14863 / T).